Here is a 235-residue protein sequence, read N- to C-terminus: Small ribosomal subunit protein uS2c (235 aa).

The protein belongs to the universal ribosomal protein uS2 family.

The protein localises to the plastid. The protein resides in the chloroplast. This Zygnema circumcarinatum (Green alga) protein is Small ribosomal subunit protein uS2c (rps2).